The sequence spans 159 residues: Ribosomal RNA large subunit methyltransferase H (159 aa).

S-adenosyl-L-methionine-binding positions include Leu76, Gly108, and 127–132 (FSPMTF).

This sequence belongs to the RNA methyltransferase RlmH family. As to quaternary structure, homodimer.

Its subcellular location is the cytoplasm. It catalyses the reaction pseudouridine(1915) in 23S rRNA + S-adenosyl-L-methionine = N(3)-methylpseudouridine(1915) in 23S rRNA + S-adenosyl-L-homocysteine + H(+). Specifically methylates the pseudouridine at position 1915 (m3Psi1915) in 23S rRNA. The polypeptide is Ribosomal RNA large subunit methyltransferase H (Alkaliphilus oremlandii (strain OhILAs) (Clostridium oremlandii (strain OhILAs))).